The chain runs to 265 residues: V0 assembly protein 1 (265 aa).

The signal sequence occupies residues 1-24 (MVFGQLYALFIFTLSCCISKTVQA). Topologically, residues 25 to 223 (DSSKESSSFI…ILSSIWTEGL (199 aa)) are vacuolar. N-linked (GlcNAc...) asparagine glycosylation is found at asparagine 69, asparagine 104, and asparagine 172. Residues 224–244 (LMCLIVSALLLFILIVALSWI) traverse the membrane as a helical segment. The Cytoplasmic segment spans residues 245-265 (SNLDITYGALEKSTNPIKKNN). Residues 262-265 (KKNN) carry the ER retention motif motif.

This sequence belongs to the VOA1 family. As to quaternary structure, V-ATPase is a heteromultimeric enzyme composed of a peripheral catalytic V1 complex (components A to H) attached to an integral membrane V0 proton pore complex (components: a, c, c', c'', d, e, f and VOA1). Interacts with VMA21. Associates with the assembling V0 complex.

It is found in the vacuole membrane. Its subcellular location is the endoplasmic reticulum membrane. In terms of biological role, accessory component of the V0 complex of vacuolar(H+)-ATPase (V-ATPase), a multisubunit enzyme composed of a peripheral complex (V1) that hydrolyzes ATP and a membrane integral complex (V0) that translocates protons. V-ATPase is responsible for acidifying and maintaining the pH of intracellular compartments. Functions with VMA21 in assembly of the V0 complex. In Saccharomyces cerevisiae (strain ATCC 204508 / S288c) (Baker's yeast), this protein is V0 assembly protein 1 (VOA1).